A 57-amino-acid polypeptide reads, in one-letter code: UPF0391 membrane protein RHECIAT_CH0003936 (57 aa).

The next 2 membrane-spanning stretches (helical) occupy residues 4 to 24 and 33 to 53; these read WALI…SGVS and VLFG…LMAG.

It belongs to the UPF0391 family.

It is found in the cell membrane. The chain is UPF0391 membrane protein RHECIAT_CH0003936 from Rhizobium etli (strain CIAT 652).